The primary structure comprises 104 residues: Large ribosomal subunit protein bL21 (104 aa).

Belongs to the bacterial ribosomal protein bL21 family. As to quaternary structure, part of the 50S ribosomal subunit. Contacts protein L20.

Its function is as follows. This protein binds to 23S rRNA in the presence of protein L20. The chain is Large ribosomal subunit protein bL21 from Thermodesulfovibrio yellowstonii (strain ATCC 51303 / DSM 11347 / YP87).